Here is a 324-residue protein sequence, read N- to C-terminus: DNA repair and recombination protein RadA (324 aa).

114 to 121 (GEFGSGKT) serves as a coordination point for ATP.

It belongs to the eukaryotic RecA-like protein family.

Functionally, involved in DNA repair and in homologous recombination. Binds and assemble on single-stranded DNA to form a nucleoprotein filament. Hydrolyzes ATP in a ssDNA-dependent manner and promotes DNA strand exchange between homologous DNA molecules. The chain is DNA repair and recombination protein RadA from Sulfurisphaera tokodaii (strain DSM 16993 / JCM 10545 / NBRC 100140 / 7) (Sulfolobus tokodaii).